Here is a 213-residue protein sequence, read N- to C-terminus: tRNA (guanine-N(7)-)-methyltransferase (213 aa).

4 residues coordinate S-adenosyl-L-methionine: Glu44, Glu69, Asn96, and Asp118. Residue Asp118 is part of the active site. Lys122 provides a ligand contact to substrate. The interaction with RNA stretch occupies residues 124–129 (RHEKRR). Residues Asp154 and 191–194 (TEYE) each bind substrate.

This sequence belongs to the class I-like SAM-binding methyltransferase superfamily. TrmB family.

It carries out the reaction guanosine(46) in tRNA + S-adenosyl-L-methionine = N(7)-methylguanosine(46) in tRNA + S-adenosyl-L-homocysteine. It functions in the pathway tRNA modification; N(7)-methylguanine-tRNA biosynthesis. Catalyzes the formation of N(7)-methylguanine at position 46 (m7G46) in tRNA. The chain is tRNA (guanine-N(7)-)-methyltransferase from Oceanobacillus iheyensis (strain DSM 14371 / CIP 107618 / JCM 11309 / KCTC 3954 / HTE831).